Consider the following 225-residue polypeptide: Imidazole glycerol phosphate synthase subunit HisH (225 aa).

Residues threonine 3–proline 225 enclose the Glutamine amidotransferase type-1 domain. Cysteine 82 serves as the catalytic Nucleophile. Residues histidine 205 and glutamate 207 contribute to the active site.

As to quaternary structure, heterodimer of HisH and HisF.

Its subcellular location is the cytoplasm. It carries out the reaction 5-[(5-phospho-1-deoxy-D-ribulos-1-ylimino)methylamino]-1-(5-phospho-beta-D-ribosyl)imidazole-4-carboxamide + L-glutamine = D-erythro-1-(imidazol-4-yl)glycerol 3-phosphate + 5-amino-1-(5-phospho-beta-D-ribosyl)imidazole-4-carboxamide + L-glutamate + H(+). The catalysed reaction is L-glutamine + H2O = L-glutamate + NH4(+). Its pathway is amino-acid biosynthesis; L-histidine biosynthesis; L-histidine from 5-phospho-alpha-D-ribose 1-diphosphate: step 5/9. In terms of biological role, IGPS catalyzes the conversion of PRFAR and glutamine to IGP, AICAR and glutamate. The HisH subunit catalyzes the hydrolysis of glutamine to glutamate and ammonia as part of the synthesis of IGP and AICAR. The resulting ammonia molecule is channeled to the active site of HisF. This Bordetella bronchiseptica (strain ATCC BAA-588 / NCTC 13252 / RB50) (Alcaligenes bronchisepticus) protein is Imidazole glycerol phosphate synthase subunit HisH.